The chain runs to 640 residues: 1,4-alpha-glucan branching enzyme GlgB (640 aa).

Asp-318 functions as the Nucleophile in the catalytic mechanism. Glu-371 serves as the catalytic Proton donor.

It belongs to the glycosyl hydrolase 13 family. GlgB subfamily. Monomer.

The enzyme catalyses Transfers a segment of a (1-&gt;4)-alpha-D-glucan chain to a primary hydroxy group in a similar glucan chain.. The protein operates within glycan biosynthesis; glycogen biosynthesis. Catalyzes the formation of the alpha-1,6-glucosidic linkages in glycogen by scission of a 1,4-alpha-linked oligosaccharide from growing alpha-1,4-glucan chains and the subsequent attachment of the oligosaccharide to the alpha-1,6 position. The chain is 1,4-alpha-glucan branching enzyme GlgB from Francisella tularensis subsp. mediasiatica (strain FSC147).